Reading from the N-terminus, the 187-residue chain is Calmodulin-like protein 1 (187 aa).

A2 carries the N-acetylalanine modification. EF-hand domains lie at 8-43 (EQIV…LGQN), 44-79 (PTEA…KLRD), 81-116 (DSEE…IGER), and 117-152 (LTDE…KKRR). Ca(2+) contacts are provided by D21, D23, D25, S27, E32, D57, D59, N61, N63, E68, D94, D96, N98, E105, D130, D132, D134, Q136, and E141. The segment at 153–187 (KRIEEKREHDGGSRTKSAGPSAAPASKRGQKCVIL) is disordered. Over residues 154–165 (RIEEKREHDGGS) the composition is skewed to basic and acidic residues. Over residues 169 to 178 (SAGPSAAPAS) the composition is skewed to low complexity. A Cysteine methyl ester modification is found at C184. C184 carries S-farnesyl cysteine lipidation. Residues 185-187 (VIL) constitute a propeptide, removed in mature form.

This sequence belongs to the calmodulin family. As to expression, expressed in roots, etiolated shoots and flowers.

The protein localises to the membrane. Calcium-binding protein that binds and activates CAMK1, a calcium/calmodulin-dependent kinase. The sequence is that of Calmodulin-like protein 1 (CML1) from Oryza sativa subsp. indica (Rice).